The primary structure comprises 563 residues: UvrABC system protein C (563 aa).

Positions 12-87 (NKSGVYIFKK…IYKYKPKYNA (76 aa)) constitute a GIY-YIG domain. Residues 194 to 229 (SNVISFIKLKMEQHARLLDFENAAKYRDILLNFNKV) form the UVR domain.

Belongs to the UvrC family. In terms of assembly, interacts with UvrB in an incision complex.

The protein localises to the cytoplasm. In terms of biological role, the UvrABC repair system catalyzes the recognition and processing of DNA lesions. UvrC both incises the 5' and 3' sides of the lesion. The N-terminal half is responsible for the 3' incision and the C-terminal half is responsible for the 5' incision. This chain is UvrABC system protein C, found in Fervidobacterium nodosum (strain ATCC 35602 / DSM 5306 / Rt17-B1).